We begin with the raw amino-acid sequence, 593 residues long: Cysteine/serine-rich nuclear protein 1 (593 aa).

Disordered regions lie at residues 1-66, 313-392, and 478-497; these read MTGL…RDFC, FREL…GVDD, and REGS…GQSS. Composition is skewed to low complexity over residues 17–46 and 351–372; these read SSVS…VSRA and SCSS…TSGA.

Belongs to the AXUD1 family.

The protein localises to the nucleus. Binds to the consensus sequence 5'-AGAGTG-3' and has transcriptional activator activity. May have a tumor-suppressor function. May play a role in apoptosis. In Pongo abelii (Sumatran orangutan), this protein is Cysteine/serine-rich nuclear protein 1 (CSRNP1).